We begin with the raw amino-acid sequence, 463 residues long: Paraneoplastic antigen Ma3 (463 aa).

Positions Val-363–Arg-410 are disordered. The span at Tyr-383 to Gly-396 shows a compositional bias: basic residues. The CCHC-type zinc-finger motif lies at Thr-412–Asn-429. Residues Lys-440 to Lys-463 form a disordered region.

This sequence belongs to the PNMA family. Expressed at high levels in the brain and testis. Expressed at lower levels in the heart, trachea and kidney.

The protein resides in the nucleus. It localises to the nucleolus. The polypeptide is Paraneoplastic antigen Ma3 (PNMA3) (Homo sapiens (Human)).